A 580-amino-acid polypeptide reads, in one-letter code: MESLSRAGQEMSLAALKQHDPYITSIADLTGQVALYTFCPKANQWEKTDIEGTLFVYRRSASPYHGFTIVNRLNMHNLVEPVNKDLEFQLHEPFLLYRNASLSIYSIWFYDKNDCHRIAKLMADVLEEETRRSQQAARDKQSPNQANGCSDHRPIDILEMLSRAKDEYERNQMGDSNISSPGLQPSTQISNLGSTETLEETPSGLQDKSALSGHKHLTVEELFGTSLPKEQPTVVGLESEEVEKLPGDASQKEPSSFLPFSFEPSGGGPQSENMGIRPAAHHSVQPEVTTPVLITPASITQSSEKQAPSYAIPLHPVLSPTLPAEASTAQAPPSLPRSTTMMQAVKTTPRQRSPLSSQPVPELSQASLAASQSPFRAPLNVTNTASTSLPSVDLLQKLRLTQQHDQIQTQSLGKGAVAPSFSPAAGQLATPESFIEPPPKTAAARASASLSNMVLAPLQSMQQNQDPEVFAQPKVLSSAIPVAGPALVTATTSAVSSVLLSPSVFQQTVTRSSDLERKASSPSPLTVGTSENQRKPSIILSKSQLQDTLIHLIKNDSSFLSTLHEVYLQVLTKNKDNHNL.

Ser-62 bears the Phosphoserine mark. Residues 132–141 show a composition bias toward basic and acidic residues; sequence RSQQAARDKQ. Disordered stretches follow at residues 132-154, 172-209, and 245-276; these read RSQQ…DHRP, QMGD…QDKS, and LPGD…NMGI. A phosphoserine mark is found at Ser-142, Ser-179, and Ser-180. The span at 173-196 shows a compositional bias: polar residues; it reads MGDSNISSPGLQPSTQISNLGSTE. A compositionally biased stretch (low complexity) spans 253–264; the sequence is EPSSFLPFSFEP. Phosphoserine is present on residues Ser-319 and Ser-334. A compositionally biased stretch (polar residues) spans 343–359; that stretch reads QAVKTTPRQRSPLSSQP. Positions 343–371 are disordered; sequence QAVKTTPRQRSPLSSQPVPELSQASLAAS. Residue Thr-348 is modified to Phosphothreonine. Ser-353 is modified (phosphoserine). Arg-376 carries the post-translational modification Asymmetric dimethylarginine. Position 401 is a phosphothreonine (Thr-401). Phosphoserine is present on residues Ser-422, Ser-520, Ser-521, and Ser-523. Residues 510–533 are disordered; it reads TRSSDLERKASSPSPLTVGTSENQ. Polar residues predominate over residues 520-531; sequence SSPSPLTVGTSE. Phosphothreonine is present on residues Thr-526 and Thr-529.

The protein belongs to the DCP1 family. In terms of assembly, forms a complex with EDC3, DCP2, DDX6 and EDC4/HEDLS, within this complex directly interacts with EDC3. Part of a cytoplasmic complex containing proteins involved in mRNA decay, including XRN1 and LSM1. Interacts with DCP1B. Interacts with DCP2. Interacts with DDX17 in an RNA-independent manner. Interacts with PNRC2. Interacts with SMAD4. Interacts with UPF1. Interacts with ZC3HAV1. Interacts with ZFP36L1. Interacts with NBDY. Interacts with DHX34; the interaction is RNA-independent. Post-translationally, (Microbial infection) Cleaved by porcine reproductive and respiratory syndrome virus serine protease nsp4 after Glu-238. The cleavage inhibits DCP1A function.

It localises to the cytoplasm. The protein resides in the P-body. It is found in the nucleus. It catalyses the reaction a 5'-end (N(7)-methyl 5'-triphosphoguanosine)-ribonucleoside in mRNA + H2O = N(7)-methyl-GDP + a 5'-end phospho-ribonucleoside in mRNA + 2 H(+). Its function is as follows. Necessary for the degradation of mRNAs, both in normal mRNA turnover and in nonsense-mediated mRNA decay. Removes the 7-methyl guanine cap structure from mRNA molecules, yielding a 5'-phosphorylated mRNA fragment and 7m-GDP. Contributes to the transactivation of target genes after stimulation by TGFB1. Essential for embryonic development. The sequence is that of mRNA-decapping enzyme 1A (DCP1A) from Sus scrofa (Pig).